Here is a 121-residue protein sequence, read N- to C-terminus: Small ribosomal subunit protein uS13 (121 aa).

Residues 96–121 (PVRGQNTKNNARTRKGKAVAIAGKKK) form a disordered region. The segment covering 106–121 (ARTRKGKAVAIAGKKK) has biased composition (basic residues).

Belongs to the universal ribosomal protein uS13 family. Part of the 30S ribosomal subunit. Forms a loose heterodimer with protein S19. Forms two bridges to the 50S subunit in the 70S ribosome.

Located at the top of the head of the 30S subunit, it contacts several helices of the 16S rRNA. In the 70S ribosome it contacts the 23S rRNA (bridge B1a) and protein L5 of the 50S subunit (bridge B1b), connecting the 2 subunits; these bridges are implicated in subunit movement. Contacts the tRNAs in the A and P-sites. The chain is Small ribosomal subunit protein uS13 from Streptococcus pneumoniae serotype 4 (strain ATCC BAA-334 / TIGR4).